The chain runs to 256 residues: Putative F-box protein At3g51171 (256 aa).

An F-box domain is found at 1-44 (MVPLPWELEEDILSRLAAQSLVRFRSVCKRWNYLFDEKSFIKNH).

The polypeptide is Putative F-box protein At3g51171 (Arabidopsis thaliana (Mouse-ear cress)).